The following is a 589-amino-acid chain: Probable translation initiation factor IF-2 (589 aa).

One can recognise a tr-type G domain in the interval 5 to 219 (IRTPIVCVLG…IMIGLAQRYL (215 aa)). The tract at residues 14-21 (GHVDHGKT) is G1. 14–21 (GHVDHGKT) provides a ligand contact to GTP. Positions 39-43 (AITQH) are G2. Residues 75–78 (DTPG) are G3. GTP is bound by residues 75 to 79 (DTPGH) and 129 to 132 (TKLD). Residues 129–132 (TKLD) are G4. The segment at 197–199 (SSM) is G5.

Belongs to the TRAFAC class translation factor GTPase superfamily. Classic translation factor GTPase family. IF-2 subfamily.

Function in general translation initiation by promoting the binding of the formylmethionine-tRNA to ribosomes. Seems to function along with eIF-2. The polypeptide is Probable translation initiation factor IF-2 (Methanocorpusculum labreanum (strain ATCC 43576 / DSM 4855 / Z)).